A 482-amino-acid chain; its full sequence is Probable glycine dehydrogenase (decarboxylating) subunit 2 (482 aa).

Lysine 264 carries the post-translational modification N6-(pyridoxal phosphate)lysine.

This sequence belongs to the GcvP family. C-terminal subunit subfamily. In terms of assembly, the glycine cleavage system is composed of four proteins: P, T, L and H. In this organism, the P 'protein' is a heterodimer of two subunits. Pyridoxal 5'-phosphate serves as cofactor.

It catalyses the reaction N(6)-[(R)-lipoyl]-L-lysyl-[glycine-cleavage complex H protein] + glycine + H(+) = N(6)-[(R)-S(8)-aminomethyldihydrolipoyl]-L-lysyl-[glycine-cleavage complex H protein] + CO2. Its function is as follows. The glycine cleavage system catalyzes the degradation of glycine. The P protein binds the alpha-amino group of glycine through its pyridoxal phosphate cofactor; CO(2) is released and the remaining methylamine moiety is then transferred to the lipoamide cofactor of the H protein. The chain is Probable glycine dehydrogenase (decarboxylating) subunit 2 from Treponema denticola (strain ATCC 35405 / DSM 14222 / CIP 103919 / JCM 8153 / KCTC 15104).